We begin with the raw amino-acid sequence, 247 residues long: Histone acetyltransferase MCC1 (247 aa).

The N-acetyltransferase domain maps to 25–198 (IHYRPINPND…DAFLFVYFIN (174 aa)).

It belongs to the acetyltransferase family.

It catalyses the reaction L-lysyl-[protein] + acetyl-CoA = N(6)-acetyl-L-lysyl-[protein] + CoA + H(+). In terms of biological role, histone acetyltransferase that probably regulates acetylation status of histone H3 during meiosis. Histone acetylation may influence recombination and chromosome segregation. This chain is Histone acetyltransferase MCC1 (MCC1), found in Arabidopsis thaliana (Mouse-ear cress).